The following is a 185-amino-acid chain: Peptidyl-tRNA hydrolase (185 aa).

Y14 lines the tRNA pocket. H19 (proton acceptor) is an active-site residue. 3 residues coordinate tRNA: Y65, N67, and N113.

This sequence belongs to the PTH family. In terms of assembly, monomer.

It is found in the cytoplasm. It carries out the reaction an N-acyl-L-alpha-aminoacyl-tRNA + H2O = an N-acyl-L-amino acid + a tRNA + H(+). Functionally, hydrolyzes ribosome-free peptidyl-tRNAs (with 1 or more amino acids incorporated), which drop off the ribosome during protein synthesis, or as a result of ribosome stalling. Its function is as follows. Catalyzes the release of premature peptidyl moieties from peptidyl-tRNA molecules trapped in stalled 50S ribosomal subunits, and thus maintains levels of free tRNAs and 50S ribosomes. This is Peptidyl-tRNA hydrolase from Rickettsia bellii (strain OSU 85-389).